We begin with the raw amino-acid sequence, 296 residues long: Small ribosomal subunit protein uS2 (296 aa).

Residues 246 to 272 (QAKDGSVVDSGKGKSIAAHKGGGKASK) are disordered.

The protein belongs to the universal ribosomal protein uS2 family.

This is Small ribosomal subunit protein uS2 from Anaplasma phagocytophilum (strain HZ).